The following is a 303-amino-acid chain: Acetyltransferase ataH (303 aa).

A signal peptide spans 1 to 23 (MPTTAAFLRALYILTTLRGIGTS). The next 3 membrane-spanning stretches (helical) occupy residues 42 to 62 (FLLH…MMTF), 194 to 214 (LVFA…GIML), and 257 to 277 (GYIW…FPLF).

This sequence belongs to the wax synthase family.

The protein resides in the membrane. The protein operates within mycotoxin biosynthesis. In terms of biological role, acetyltransferase; part of the gene cluster that mediates the biosynthesis of acetylaranotin, a member of the epipolythiodioxopiperazine (ETP) class of toxins characterized by a disulfide-bridged cyclic dipeptide. The first step of acetylaranotin biosynthesis is performed by the NRPS ataP which produces diketopiperazine cyclo-L-Phe-L-Phe via the condensation of 2 phenylalanines (L-Phe). The ataC domain of ataTC then catalyzes the formation of bishydroxylation of cyclo-L-Phe-L-Phe. The glutathione S-transferase domain ataG in ataIMG further catalyzes the conjugation of two glutathiones to the bishydroxylated intermediate. Next, the dipeptidase ataJ removes the Glu residues. The following step is performed by the carbon sulfur lyase domain ataI of ataIMG which may convert the bis-cysteinyl adduct to yield an epidithiol intermediate. The ataT domain from ataTC then catalyzes the oxidation of the free dithiols, followed by a cyclization step catalyzed by the cytochrome P450 ataF. AtaF probably acts as an epoxidase to promote a dual epoxidation formation at C8 and C9 along with C8' and C9', followed by the spontaneous nucleophilic attack of the amide nitrogens N10 and N10' to yield an intermediate with the pyrrolidine partial structure. The final steps of acetylaranotin biosynthesis involve the acetylation and ring rearrangement of an epitetrathiodiketopiperazine intermediate to produce acetylaranotin. AtaH probably catalyzes the acetylation of epitetrathiodiketopiperazine to produce a diacetate and ataY is responsible for the formation of the dihydrooxepin moiety that converts the diacetate intermediate to acetylaranotin via acetylapoaranotin. Both enzymes could function independently in the absence of the other. The acetylaranotin bis-thiomethyltransferase ataS located outside of acetylaranotin gene cluster is the main thiomethyltransferase responsible for converting acetylaranotin and its related intermediates to their methylated forms. This is Acetyltransferase ataH from Aspergillus terreus (strain NIH 2624 / FGSC A1156).